A 330-amino-acid chain; its full sequence is MTLRIAITPGEPAGIGPDLLLKLAQQTWDAQLVAIADANMLKQRAKHLGLSIKLIEFDQHAAATPAPAGSLYLHQVDVAEPVELGVLNDANGQYVLDTLRIASEKNMDGTFAAVVTGPVHKGIINKAGISFSGHTEYFAQQSNTADVVMMLATQGLRVALVTTHIPLAYVSRAITEDRLIKVASILNHDLQTKFGIEKPRILVCGLNPHAGEDGHLGREEIDTIIPTLEILNNQGMNLIGPLPADTLFQDKYLNEADAVLAMYHDQGLPVLKYKGFGNSVNITLGLPFIRTSVDHGTALDLAGKGTADVGSFELAIREAIKLAQEKAQNQ.

The substrate site is built by His-134 and Thr-135. Positions 164, 209, and 264 each coordinate a divalent metal cation. Residues Lys-272, Asn-281, and Arg-290 each coordinate substrate.

Belongs to the PdxA family. Homodimer. Zn(2+) serves as cofactor. Mg(2+) is required as a cofactor. Requires Co(2+) as cofactor.

It localises to the cytoplasm. The enzyme catalyses 4-(phosphooxy)-L-threonine + NAD(+) = 3-amino-2-oxopropyl phosphate + CO2 + NADH. It participates in cofactor biosynthesis; pyridoxine 5'-phosphate biosynthesis; pyridoxine 5'-phosphate from D-erythrose 4-phosphate: step 4/5. Its function is as follows. Catalyzes the NAD(P)-dependent oxidation of 4-(phosphooxy)-L-threonine (HTP) into 2-amino-3-oxo-4-(phosphooxy)butyric acid which spontaneously decarboxylates to form 3-amino-2-oxopropyl phosphate (AHAP). The chain is 4-hydroxythreonine-4-phosphate dehydrogenase from Pseudoalteromonas translucida (strain TAC 125).